Consider the following 467-residue polypeptide: ATP synthase subunit beta (467 aa).

Residue 156–163 (GGAGVGKT) coordinates ATP.

The protein belongs to the ATPase alpha/beta chains family. F-type ATPases have 2 components, CF(1) - the catalytic core - and CF(0) - the membrane proton channel. CF(1) has five subunits: alpha(3), beta(3), gamma(1), delta(1), epsilon(1). CF(0) has three main subunits: a(1), b(2) and c(9-12). The alpha and beta chains form an alternating ring which encloses part of the gamma chain. CF(1) is attached to CF(0) by a central stalk formed by the gamma and epsilon chains, while a peripheral stalk is formed by the delta and b chains.

It localises to the cell inner membrane. The catalysed reaction is ATP + H2O + 4 H(+)(in) = ADP + phosphate + 5 H(+)(out). In terms of biological role, produces ATP from ADP in the presence of a proton gradient across the membrane. The catalytic sites are hosted primarily by the beta subunits. The polypeptide is ATP synthase subunit beta (Cupriavidus metallidurans (strain ATCC 43123 / DSM 2839 / NBRC 102507 / CH34) (Ralstonia metallidurans)).